The primary structure comprises 165 residues: Crossover junction endodeoxyribonuclease RuvC (165 aa).

Active-site residues include Asp-7, Glu-67, and Asp-140. Mg(2+) is bound by residues Asp-7, Glu-67, and Asp-140.

Belongs to the RuvC family. In terms of assembly, homodimer which binds Holliday junction (HJ) DNA. The HJ becomes 2-fold symmetrical on binding to RuvC with unstacked arms; it has a different conformation from HJ DNA in complex with RuvA. In the full resolvosome a probable DNA-RuvA(4)-RuvB(12)-RuvC(2) complex forms which resolves the HJ. It depends on Mg(2+) as a cofactor.

Its subcellular location is the cytoplasm. It catalyses the reaction Endonucleolytic cleavage at a junction such as a reciprocal single-stranded crossover between two homologous DNA duplexes (Holliday junction).. In terms of biological role, the RuvA-RuvB-RuvC complex processes Holliday junction (HJ) DNA during genetic recombination and DNA repair. Endonuclease that resolves HJ intermediates. Cleaves cruciform DNA by making single-stranded nicks across the HJ at symmetrical positions within the homologous arms, yielding a 5'-phosphate and a 3'-hydroxyl group; requires a central core of homology in the junction. The consensus cleavage sequence is 5'-(A/T)TT(C/G)-3'. Cleavage occurs on the 3'-side of the TT dinucleotide at the point of strand exchange. HJ branch migration catalyzed by RuvA-RuvB allows RuvC to scan DNA until it finds its consensus sequence, where it cleaves and resolves the cruciform DNA. The sequence is that of Crossover junction endodeoxyribonuclease RuvC from Desulfitobacterium hafniense (strain DSM 10664 / DCB-2).